Reading from the N-terminus, the 341-residue chain is Glycerol-3-phosphate dehydrogenase [NAD(P)+] (341 aa).

NADPH-binding residues include Ser15, Trp16, Arg36, and Lys110. Sn-glycerol 3-phosphate contacts are provided by Lys110, Gly139, and Ser141. Ala143 lines the NADPH pocket. Residues Lys194, Asp247, Ser257, Arg258, and Asn259 each contribute to the sn-glycerol 3-phosphate site. The active-site Proton acceptor is the Lys194. Arg258 is a binding site for NADPH. Residues Val282 and Glu284 each contribute to the NADPH site.

Belongs to the NAD-dependent glycerol-3-phosphate dehydrogenase family.

It localises to the cytoplasm. It carries out the reaction sn-glycerol 3-phosphate + NAD(+) = dihydroxyacetone phosphate + NADH + H(+). The catalysed reaction is sn-glycerol 3-phosphate + NADP(+) = dihydroxyacetone phosphate + NADPH + H(+). The protein operates within membrane lipid metabolism; glycerophospholipid metabolism. Its function is as follows. Catalyzes the reduction of the glycolytic intermediate dihydroxyacetone phosphate (DHAP) to sn-glycerol 3-phosphate (G3P), the key precursor for phospholipid synthesis. This Stenotrophomonas maltophilia (strain K279a) protein is Glycerol-3-phosphate dehydrogenase [NAD(P)+].